Reading from the N-terminus, the 113-residue chain is Large ribosomal subunit protein uL22 (113 aa).

The protein belongs to the universal ribosomal protein uL22 family. Part of the 50S ribosomal subunit.

In terms of biological role, this protein binds specifically to 23S rRNA; its binding is stimulated by other ribosomal proteins, e.g. L4, L17, and L20. It is important during the early stages of 50S assembly. It makes multiple contacts with different domains of the 23S rRNA in the assembled 50S subunit and ribosome. The globular domain of the protein is located near the polypeptide exit tunnel on the outside of the subunit, while an extended beta-hairpin is found that lines the wall of the exit tunnel in the center of the 70S ribosome. This is Large ribosomal subunit protein uL22 from Thermus thermophilus (strain ATCC BAA-163 / DSM 7039 / HB27).